A 281-amino-acid chain; its full sequence is tRNA pseudouridine synthase A (281 aa).

The Nucleophile role is filled by D55. Y110 serves as a coordination point for substrate.

The protein belongs to the tRNA pseudouridine synthase TruA family.

It carries out the reaction uridine(38/39/40) in tRNA = pseudouridine(38/39/40) in tRNA. Functionally, formation of pseudouridine at positions 38, 39 and 40 in the anticodon stem and loop of transfer RNAs. In Methanocorpusculum labreanum (strain ATCC 43576 / DSM 4855 / Z), this protein is tRNA pseudouridine synthase A.